The primary structure comprises 75 residues: Small ribosomal subunit protein bS18 (75 aa).

This sequence belongs to the bacterial ribosomal protein bS18 family. Part of the 30S ribosomal subunit. Forms a tight heterodimer with protein bS6.

Its function is as follows. Binds as a heterodimer with protein bS6 to the central domain of the 16S rRNA, where it helps stabilize the platform of the 30S subunit. The chain is Small ribosomal subunit protein bS18 from Paracoccus denitrificans (strain Pd 1222).